The primary structure comprises 859 residues: Protein SEY1 (859 aa).

The Cytoplasmic portion of the chain corresponds to 1 to 742 (MMMNSHFAGV…KRSAIGGITQ (742 aa)). The GB1/RHD3-type G domain occupies 49–291 (GFNYHLISVF…FQPQYHRRIP (243 aa)). 59–66 (GSQSTGKS) serves as a coordination point for GTP. Residues 476-496 (FEHELKVYRKDLDDVSGRLRK) adopt a coiled-coil conformation. A disordered region spans residues 525–544 (LGTGRGGSGAPEHGERPPSE). Residues 743–763 (VPLYFYGLLVALGWNEIVAVL) form a helical membrane-spanning segment. The Lumenal segment spans residues 764 to 766 (RNP). Residues 767-787 (VYFIFLILCAVGAYVTYTLNL) traverse the membrane as a helical segment. Residues 788-859 (WGPMIRMGNA…DAEVEDLDDI (72 aa)) are Cytoplasmic-facing. Residues 816-859 (SSESGRQAMAMSGNQPRGESVRMNRLNGNGKKDEDAEVEDLDDI) form a disordered region. The segment covering 850 to 859 (DAEVEDLDDI) has biased composition (acidic residues).

The protein belongs to the TRAFAC class dynamin-like GTPase superfamily. GB1/RHD3 GTPase family. RHD3 subfamily.

It is found in the endoplasmic reticulum membrane. Cooperates with the reticulon proteins and tubule-shaping DP1 family proteins to generate and maintain the structure of the tubular endoplasmic reticulum network. Has GTPase activity, which is required for its function in ER organization. The protein is Protein SEY1 of Phaeosphaeria nodorum (strain SN15 / ATCC MYA-4574 / FGSC 10173) (Glume blotch fungus).